The chain runs to 1714 residues: MSSIDISGRYALNDLEMVSKYQTAYACEGKKLTIECDPGDVINLIRANYGRFSITICNDHGNVEWSVNCMFPKSLTVLNSRCAHKQSCSVLAATSMFGDPCPGTHKYLEAHYQCISAAQTSTTTNRPSPPPWVLNNGPPIFGNGSGLIHPPGSPGAAPPPPRLPTLPGVVGISGNGGLFNVPPPHTVTHSTPSSSTVPGRMKGVATSTTTTKNPAGRHDGLPPPPQLHHHHTHHGEEAAPPTKPSSKLPSAGNATAPSNTRILTGVGGSGTDDGTLLTTKSSPNRPPVTASNGSPASGNNSVVRTINNINMNAAGMSGADDESKLFCGPTHARNLFWNMTRVGDVNVQPCPGGAAGIAKWRCVLMKRLPDSGYDEYDDDPSSTTPAPSGGDCLHNSSSCDPPVSMAHKVNQRLRNFEPTWHPMTPDLTQCRSLWLNNLELRVNQRDSSLISIANDMSEVTSSKTLYGGDMLVTTKIIQTVSEKMLHDKETFPDQRQREAMIMELLHCVVKTGSNLLDESQLSSWLDLNPEDQMRVATSLLTGLEYNAFLLADTIIRERSVVQKVKNILLSVRVLETKTIPPSVIFPDSDQWPLSSDRIELPRAALLDNSEGGLVRIVFAAFDRLESILKPSYDHFDLKSSRSYVRNTAILANDSSDSNTGEIQQRIRILNSKVISASLGKGRHIQLSQPITLTLKHLKTENVTNPTCVFWNYIDHAWSANGCSLESTNRTHSVCSCNHLTNFAILMDVVDEHQHSLFTMFDGNMRVFIYISIAICVVFIVIALLTLKLFNGVFVKSARTTIYTSIYVCLLAIELLFLLGIEQTETSIFCGFITVFLHCAILSGAAWFCYEAFHSYYTLTSDELLVEVDQTPKVNWYYLLSYGLSVSVVAISVAINPSTYTQNDYCVLMEANILFYATFVAPVLIFFVAAIGYTFLSWIIMCRKSCTGLKTKEHTRLASVRFDIRCSFVFLLLLSAVWCSAYFYLRGAKTDEDTTTIYGYCFICFNTLLGLYIFVFHCIQNEKIRREYRKYVRQHAWLPKCLRCSKTSISSGIVAGGGPAAGTLCSVNTSKKPKLPLGVSEEVHGEQQQHQQAMGVPAPEDAIMGATSDCELNEAQQRRTLKSGLMTGTLQTPQQPLAGHVVLERGSTLRSTGHASPTSSAGSTHLIFAHKQQQQQQALGESYYHQPDYYSWKQPPQGGLKSQREYYNNAGVAASSPQQAHEVFYWTQKPNSQHGKKKRGGAVPASPSGSLHSRTAAASQVLFYPSYKKTKQGQPSGYPHYAEALDPPHSAGAAFYQQQQQMRRQQQQQQQQQQQQLSSDEEQAEQHAHLLHLQHQQQHQRRVGGQQQLPAPPPHMAHFQQEFMQRQFRNKTSNCDLAMGGDTYHNQGSEGGADVCPVYEEILSNRNSDVQHYEVGDFDVDEVYNNSVGTGVFNSMRAAITAGGSRYGGGSLSGGSVSSRSQQQQLQKQQKQQQQQQQRSARRCTADDDDDDDEEEDDEATAAEQLHDSVCDDDDEEEDSDLDDDAHKLPPQSDERMRRLMAMQDEDFKRRFQRQQRKNGASIDYGALPPGVAPGAGSAGPHPDHNRAVFGVSGGVGEGSMRGAYRQQQQQQQQQLNAKSPSARLAVNELFGHGNAGPPLPPANQTPAQKRQQLQKLSPQSTTSSSSHTSHSNLQPHPHPLTHQHPHPPQHQQRHLSAMLDENNTVRCYLEPLAK.

Topologically, residues 1–765 (MSSIDISGRY…LFTMFDGNMR (765 aa)) are extracellular. Residues 26 to 115 (ACEGKKLTIE…KYLEAHYQCI (90 aa)) enclose the SUEL-type lectin domain. The N-linked (GlcNAc...) asparagine glycan is linked to Asn143. The disordered stretch occupies residues 183 to 302 (PPHTVTHSTP…GSPASGNNSV (120 aa)). Residues 186–198 (TVTHSTPSSSTVP) show a composition bias toward low complexity. Positions 244–262 (PSSKLPSAGNATAPSNTRI) are enriched in polar residues. N-linked (GlcNAc...) asparagine glycosylation is present at Asn253. Low complexity-rich tracts occupy residues 272-282 (DDGTLLTTKSS) and 290-301 (ASNGSPASGNNS). N-linked (GlcNAc...) asparagine glycosylation is found at Asn299, Asn338, Asn395, Asn652, Asn701, and Asn728. The interval 373–397 (YDEYDDDPSSTTPAPSGGDCLHNSS) is disordered. The 195-residue stretch at 558–752 (RSVVQKVKNI…AILMDVVDEH (195 aa)) folds into the GAIN-B domain. Cystine bridges form between Cys707–Cys734 and Cys722–Cys736. Positions 707–752 (CVFWNYIDHAWSANGCSLESTNRTHSVCSCNHLTNFAILMDVVDEH) are GPS. Residues 766–786 (VFIYISIAICVVFIVIALLTL) traverse the membrane as a helical segment. At 787 to 799 (KLFNGVFVKSART) the chain is on the cytoplasmic side. The helical transmembrane segment at 800–820 (TIYTSIYVCLLAIELLFLLGI) threads the bilayer. At 821-826 (EQTETS) the chain is on the extracellular side. A helical membrane pass occupies residues 827 to 847 (IFCGFITVFLHCAILSGAAWF). Topologically, residues 848 to 873 (CYEAFHSYYTLTSDELLVEVDQTPKV) are cytoplasmic. A helical membrane pass occupies residues 874–894 (NWYYLLSYGLSVSVVAISVAI). The Extracellular portion of the chain corresponds to 895–911 (NPSTYTQNDYCVLMEAN). The helical transmembrane segment at 912-932 (ILFYATFVAPVLIFFVAAIGY) threads the bilayer. The Cytoplasmic segment spans residues 933-966 (TFLSWIIMCRKSCTGLKTKEHTRLASVRFDIRCS). A helical membrane pass occupies residues 967-987 (FVFLLLLSAVWCSAYFYLRGA). Topologically, residues 988–994 (KTDEDTT) are extracellular. The helical transmembrane segment at 995 to 1015 (TIYGYCFICFNTLLGLYIFVF) threads the bilayer. Residues 1016 to 1714 (HCIQNEKIRR…VRCYLEPLAK (699 aa)) lie on the Cytoplasmic side of the membrane. Phosphoserine is present on residues Ser1155, Ser1245, and Ser1252. Disordered stretches follow at residues 1229 to 1253 (PNSQ…LHSR), 1268 to 1287 (KTKQ…LDPP), 1293 to 1354 (AFYQ…PPPH), 1447 to 1536 (GGGS…DERM), and 1551 to 1694 (FQRQ…QQRH). Over residues 1296 to 1315 (QQQQQMRRQQQQQQQQQQQQ) the composition is skewed to low complexity. Phosphoserine occurs at positions 1317 and 1318. 2 stretches are compositionally biased toward low complexity: residues 1330–1348 (LHLQ…QQQL) and 1453–1478 (GGSV…QQQR). Acidic residues-rich tracts occupy residues 1486 to 1500 (DDDD…DEAT) and 1510 to 1523 (CDDD…DLDD). The segment covering 1524–1536 (DAHKLPPQSDERM) has biased composition (basic and acidic residues). Residues 1565–1580 (GALPPGVAPGAGSAGP) are compositionally biased toward low complexity. Over residues 1644 to 1659 (QTPAQKRQQLQKLSPQ) the composition is skewed to polar residues. A compositionally biased stretch (low complexity) spans 1660–1675 (STTSSSSHTSHSNLQP). Basic residues predominate over residues 1679 to 1693 (PLTHQHPHPPQHQQR).

It belongs to the G-protein coupled receptor 2 family. LN-TM7 subfamily. As to quaternary structure, forms a heterodimer, consisting of a large extracellular region non-covalently linked to a seven-transmembrane moiety. Post-translationally, proteolytically cleaved into 2 subunits, an extracellular subunit and a seven-transmembrane subunit.

The protein resides in the cell membrane. This chain is Latrophilin Cirl, found in Drosophila ananassae (Fruit fly).